A 381-amino-acid polypeptide reads, in one-letter code: Queuine tRNA-ribosyltransferase (381 aa).

Catalysis depends on aspartate 103, which acts as the Proton acceptor. Substrate is bound by residues 103–107 (DSGGF), aspartate 157, glutamine 200, and glycine 227. The tract at residues 258-264 (GVGTYRE) is RNA binding. The active-site Nucleophile is the aspartate 277. The tract at residues 282–286 (TRLAR) is RNA binding; important for wobble base 34 recognition. Residues cysteine 315, cysteine 317, cysteine 320, and histidine 346 each coordinate Zn(2+).

This sequence belongs to the queuine tRNA-ribosyltransferase family. In terms of assembly, homodimer. Within each dimer, one monomer is responsible for RNA recognition and catalysis, while the other monomer binds to the replacement base PreQ1. Zn(2+) is required as a cofactor.

The catalysed reaction is 7-aminomethyl-7-carbaguanine + guanosine(34) in tRNA = 7-aminomethyl-7-carbaguanosine(34) in tRNA + guanine. Its pathway is tRNA modification; tRNA-queuosine biosynthesis. In terms of biological role, catalyzes the base-exchange of a guanine (G) residue with the queuine precursor 7-aminomethyl-7-deazaguanine (PreQ1) at position 34 (anticodon wobble position) in tRNAs with GU(N) anticodons (tRNA-Asp, -Asn, -His and -Tyr). Catalysis occurs through a double-displacement mechanism. The nucleophile active site attacks the C1' of nucleotide 34 to detach the guanine base from the RNA, forming a covalent enzyme-RNA intermediate. The proton acceptor active site deprotonates the incoming PreQ1, allowing a nucleophilic attack on the C1' of the ribose to form the product. After dissociation, two additional enzymatic reactions on the tRNA convert PreQ1 to queuine (Q), resulting in the hypermodified nucleoside queuosine (7-(((4,5-cis-dihydroxy-2-cyclopenten-1-yl)amino)methyl)-7-deazaguanosine). This chain is Queuine tRNA-ribosyltransferase, found in Cyanothece sp. (strain PCC 7425 / ATCC 29141).